A 142-amino-acid polypeptide reads, in one-letter code: MKTFSAKPHEVKRNWFVIDATDKVLGRVASEVALRLRGKHKPEFTPHVDTGDFIIVINAAKLRVTGAKTTDKKYYRHSGYPGGIYETTFGKMQQRFPGRALEKAVKGMLPKGPLGYAMIKKLKVYAEGSHPHEAQQPQVLEI.

This sequence belongs to the universal ribosomal protein uL13 family. As to quaternary structure, part of the 50S ribosomal subunit.

Functionally, this protein is one of the early assembly proteins of the 50S ribosomal subunit, although it is not seen to bind rRNA by itself. It is important during the early stages of 50S assembly. In Ralstonia nicotianae (strain ATCC BAA-1114 / GMI1000) (Ralstonia solanacearum), this protein is Large ribosomal subunit protein uL13.